An 84-amino-acid chain; its full sequence is Large ribosomal subunit protein bL27 (84 aa).

The disordered stretch occupies residues 1-21 (MAHKKGQGSTRNGRDSHSKRL). A compositionally biased stretch (basic and acidic residues) spans 12-21 (NGRDSHSKRL).

The protein belongs to the bacterial ribosomal protein bL27 family.

In Methylacidiphilum infernorum (isolate V4) (Methylokorus infernorum (strain V4)), this protein is Large ribosomal subunit protein bL27.